The primary structure comprises 167 residues: Leptin (167 aa).

The first 21 residues, 1–21 (MRCGPLCRFLWLWPYLSYIEA), serve as a signal peptide directing secretion. The cysteines at positions 117 and 167 are disulfide-linked.

Belongs to the leptin family.

Its subcellular location is the secreted. Functionally, key player in the regulation of energy balance and body weight control. Once released into the circulation, has central and peripheral effects by binding LEPR, found in many tissues, which results in the activation of several major signaling pathways. In the hypothalamus, acts as an appetite-regulating factor that induces a decrease in food intake and an increase in energy consumption by inducing anorexinogenic factors and suppressing orexigenic neuropeptides, also regulates bone mass and secretion of hypothalamo-pituitary-adrenal hormones. In the periphery, increases basal metabolism, influences reproductive function, regulates pancreatic beta-cell function and insulin secretion, is pro-angiogenic for endothelial cell and affects innate and adaptive immunity. In the arcuate nucleus of the hypothalamus, activates by depolarization POMC neurons inducing FOS and SOCS3 expression to release anorexigenic peptides and inhibits by hyperpolarization NPY neurons inducing SOCS3 with a consequent reduction on release of orexigenic peptides. In addition to its known satiety inducing effect, has a modulatory role in nutrient absorption. In the intestine, reduces glucose absorption by enterocytes by activating PKC and leading to a sequential activation of p38, PI3K and ERK signaling pathways which exerts an inhibitory effect on glucose absorption. Acts as a growth factor on certain tissues, through the activation of different signaling pathways increases expression of genes involved in cell cycle regulation such as CCND1, via JAK2-STAT3 pathway, or VEGFA, via MAPK1/3 and PI3K-AKT1 pathways. May also play an apoptotic role via JAK2-STAT3 pathway and up-regulation of BIRC5 expression. Pro-angiogenic, has mitogenic activity on vascular endothelial cells and plays a role in matrix remodeling by regulating the expression of matrix metalloproteinases (MMPs) and tissue inhibitors of metalloproteinases (TIMPs). In innate immunity, modulates the activity and function of neutrophils by increasing chemotaxis and the secretion of oxygen radicals. Increases phagocytosis by macrophages and enhances secretion of pro-inflammatory mediators. Increases cytotoxic ability of NK cells. Plays a pro-inflammatory role, in synergy with IL1B, by inducing NOS2 which promotes the production of IL6, IL8 and Prostaglandin E2, through a signaling pathway that involves JAK2, PI3K, MAP2K1/MEK1 and MAPK14/p38. In adaptive immunity, promotes the switch of memory T-cells towards T helper-1 cell immune responses. Increases CD4(+)CD25(-) T-cell proliferation and reduces autophagy during TCR (T-cell receptor) stimulation, through MTOR signaling pathway activation and BCL2 up-regulation. The polypeptide is Leptin (LEP) (Ursus thibetanus (Asiatic black bear)).